The chain runs to 297 residues: Ubiquinol oxidase 2, mitochondrial (297 aa).

Residues 17 to 43 are disordered; the sequence is VALNDKQHDKKVENGGAAASGGGDGGD. A helical membrane pass occupies residues 122–142; the sequence is AMMLETVAAVPGMVGGMLLHC. Glu-126, Glu-165, and His-168 together coordinate Fe cation. Residues 184–204 form a helical membrane-spanning segment; it reads ALVFAVQGVFINAYFVTYLLS. Glu-216, Glu-267, and His-270 together coordinate Fe cation.

The protein belongs to the alternative oxidase family. In terms of assembly, homodimer; disulfide-linked. Fe cation is required as a cofactor.

It is found in the mitochondrion inner membrane. The catalysed reaction is 2 a ubiquinol + O2 = 2 a ubiquinone + 2 H2O. Its function is as follows. Catalyzes the cyanide-resistant oxidation of ubiquinol and the reduction of molecular oxygen to water, but does not translocate protons and consequently is not linked to oxidative phosphorylation. May increase respiration when the cytochrome respiratory pathway is restricted, or in response to low temperatures. This chain is Ubiquinol oxidase 2, mitochondrial (AOX2), found in Nicotiana tabacum (Common tobacco).